The sequence spans 154 residues: Transcriptional repressor NrdR (154 aa).

A zinc finger lies at 3-34 (CPFCGANDTKVIDSRLVAEGEQVRRRRECVAC). In terms of domain architecture, ATP-cone spans 49 to 139 (PRLIKQDGTR…VYRRFQDLDE (91 aa)).

Belongs to the NrdR family. Requires Zn(2+) as cofactor.

Negatively regulates transcription of bacterial ribonucleotide reductase nrd genes and operons by binding to NrdR-boxes. This is Transcriptional repressor NrdR from Pseudomonas entomophila (strain L48).